Here is a 444-residue protein sequence, read N- to C-terminus: L-ornithine N(5)-monooxygenase (444 aa).

FAD contacts are provided by residues E40–H48 and Q59. Position 64 (K64) interacts with substrate. V125 is a binding site for FAD. NADP(+) contacts are provided by residues A211 to S214 and R236. Substrate contacts are provided by residues N250–F253 and N280. Residue N280–A282 coordinates NADP(+). Position 408–410 (R408–C410) interacts with FAD. Residues S420–T432 show a composition bias toward basic residues. A disordered region spans residues S420 to D444.

This sequence belongs to the lysine N(6)-hydroxylase/L-ornithine N(5)-oxygenase family. FAD is required as a cofactor.

The enzyme catalyses L-ornithine + NADPH + O2 = N(5)-hydroxy-L-ornithine + NADP(+) + H2O. The protein operates within siderophore biosynthesis; ornibactin biosynthesis. Its function is as follows. Catalyzes the conversion of L-ornithine to N(5)-hydroxyornithine, the first step in the biosynthesis of all hydroxamate-containing siderophores, such as ornibactin. In Burkholderia cepacia (Pseudomonas cepacia), this protein is L-ornithine N(5)-monooxygenase.